The sequence spans 129 residues: Ribonuclease P protein component (129 aa).

It belongs to the RnpA family. In terms of assembly, consists of a catalytic RNA component (M1 or rnpB) and a protein subunit.

It catalyses the reaction Endonucleolytic cleavage of RNA, removing 5'-extranucleotides from tRNA precursor.. In terms of biological role, RNaseP catalyzes the removal of the 5'-leader sequence from pre-tRNA to produce the mature 5'-terminus. It can also cleave other RNA substrates such as 4.5S RNA. The protein component plays an auxiliary but essential role in vivo by binding to the 5'-leader sequence and broadening the substrate specificity of the ribozyme. This chain is Ribonuclease P protein component, found in Prochlorococcus marinus (strain MIT 9515).